The primary structure comprises 1021 residues: Replication factor C subunit 1 (1021 aa).

Disordered regions lie at residues 1–259 (MSSD…EGAP) and 339–392 (PAKA…GSAS). Over residues 90 to 110 (KVSDELEDDMKPLPAKEVHKE) the composition is skewed to basic and acidic residues. Basic residues predominate over residues 123–138 (SKRKTPVKPPPSKKLK). A compositionally biased stretch (acidic residues) spans 197–207 (LDDDGEEDKMD). A compositionally biased stretch (gly residues) spans 219-236 (RGRGGASGGRGRGGGGRG). 2 stretches are compositionally biased toward basic and acidic residues: residues 241 to 255 (GERKDPPHKGEKEVP) and 347 to 357 (HQSDKNSEKQQ). In terms of domain architecture, BRCT spans 257–347 (GAPDCLTGLT…KPAKATVAKH (91 aa)). Polar residues predominate over residues 374-392 (NQITTGKNISPKSNKGSAS). Residue 465–472 (SGPPGIGK) participates in ATP binding. Positions 931-1021 (VGESLPEENG…AGGSGGKRKR (91 aa)) are disordered. Positions 945-958 (EGDEEDSSDAENND) are enriched in acidic residues. A compositionally biased stretch (basic and acidic residues) spans 965–977 (TKPKLDLQSDKKK). A compositionally biased stretch (low complexity) spans 999 to 1010 (AGRSKASGSAGK). Over residues 1011–1021 (AAGGSGGKRKR) the composition is skewed to gly residues.

This sequence belongs to the activator 1 large subunit family. As to quaternary structure, heterotetramer of subunits RFC2, RFC3, RFC4 and RFC5 that can form a complex with RFC1. In terms of tissue distribution, expressed in roots, leaves, shoot apical meristem (SAM), flag leaves and panicles.

It localises to the nucleus. In terms of biological role, may be involved in DNA replication and thus regulate cell proliferation. The chain is Replication factor C subunit 1 (RFC1) from Oryza sativa subsp. japonica (Rice).